Here is a 220-residue protein sequence, read N- to C-terminus: Cell surface glycolipoprotein MPB83 (220 aa).

A signal peptide spans 1 to 24 (MINVQAKPAAAASLAAIAIAFLAG). The N-palmitoyl cysteine moiety is linked to residue Cys-25. The S-diacylglycerol cysteine moiety is linked to residue Cys-25. Thr-48 and Thr-49 each carry an O-linked (Man...) threonine glycan. One can recognise an FAS1 domain in the interval 83–215 (QDPVATAASN…ATVYMIDTVL (133 aa)).

In terms of assembly, interacts with host (human) TLR2. Post-translationally, O-glycosylated. Contains 0-3 mannose residues attached to residues 48-49 in various configurations; the dominant glycoform is Thr-48(Man)/Thr-49(Man2) with an unusual Man(1-&gt;3)Man linkage, but Thr48(Man3)/Thr49(Man0) through to Thr48(Man0/)Thr49(Man3) are also seen. When isolated from culture filtrate runs as 25 and 23 kDa proteins; the larger protein is much less abundant, mostly associated with the cell and starts at residue 28, the shorter is more abundant and starts at residue 48.

It is found in the cell membrane. The protein resides in the secreted. The protein localises to the cell wall. Functionally, induces expression of human (host) matrix metalloproteinase-9 (MMP9) in a TLR1/TLR2-dependent fashion; the acylated 20 first mature residues (residues 25-40) induce the most expression, but whole recombinant protein (non-acylated and non-glycosylated), and mannosylated but not acylated protein (residues 26-220) also induce expression. The polypeptide is Cell surface glycolipoprotein MPB83 (mpb83) (Mycobacterium bovis (strain ATCC BAA-935 / AF2122/97)).